Here is a 295-residue protein sequence, read N- to C-terminus: 4-hydroxy-tetrahydrodipicolinate synthase (295 aa).

Pyruvate is bound at residue threonine 48. Residue tyrosine 135 is the Proton donor/acceptor of the active site. Lysine 163 (schiff-base intermediate with substrate) is an active-site residue. Pyruvate is bound at residue valine 204.

The protein belongs to the DapA family. Homotetramer; dimer of dimers.

It localises to the cytoplasm. It catalyses the reaction L-aspartate 4-semialdehyde + pyruvate = (2S,4S)-4-hydroxy-2,3,4,5-tetrahydrodipicolinate + H2O + H(+). It participates in amino-acid biosynthesis; L-lysine biosynthesis via DAP pathway; (S)-tetrahydrodipicolinate from L-aspartate: step 3/4. Functionally, catalyzes the condensation of (S)-aspartate-beta-semialdehyde [(S)-ASA] and pyruvate to 4-hydroxy-tetrahydrodipicolinate (HTPA). This chain is 4-hydroxy-tetrahydrodipicolinate synthase, found in Francisella philomiragia subsp. philomiragia (strain ATCC 25017 / CCUG 19701 / FSC 153 / O#319-036).